Consider the following 324-residue polypeptide: Geranylgeranyl pyrophosphate synthase dpmpD (324 aa).

Residues K50, R53, and H82 each coordinate isopentenyl diphosphate. Mg(2+) is bound by residues D89 and D93. R98 provides a ligand contact to dimethylallyl diphosphate. Isopentenyl diphosphate is bound at residue R99. K176, T177, and Q210 together coordinate dimethylallyl diphosphate. D213 provides a ligand contact to Mg(2+). N217, K227, and K237 together coordinate dimethylallyl diphosphate.

It belongs to the FPP/GGPP synthase family. Requires Mg(2+) as cofactor.

The enzyme catalyses isopentenyl diphosphate + dimethylallyl diphosphate = (2E)-geranyl diphosphate + diphosphate. It carries out the reaction isopentenyl diphosphate + (2E)-geranyl diphosphate = (2E,6E)-farnesyl diphosphate + diphosphate. The catalysed reaction is isopentenyl diphosphate + (2E,6E)-farnesyl diphosphate = (2E,6E,10E)-geranylgeranyl diphosphate + diphosphate. It participates in secondary metabolite biosynthesis; terpenoid biosynthesis. In terms of biological role, geranylgeranyl pyrophosphate synthase; part of the gene cluster that mediates the biosynthesis of diterpenoid pyrones. The first step of the pathway is the synthesis of the alpha-pyrone moiety by the polyketide synthase dpmpA via condensation of one acetyl-CoA starter unit with 3 malonyl-CoA units and 2 methylations. The alpha-pyrone is then combined with geranylgeranyl pyrophosphate (GGPP) formed by the GGPP synthase dpmpD through the action of the prenyltransferase dpmpC to yield a linear alpha-pyrone diterpenoid. Subsequent steps in the diterpenoid pyrone biosynthetic pathway involve the decalin core formation, which is initiated by the epoxidation of the C10-C11 olefin by the FAD-dependent oxidoreductase dpmpE, and is followed by a cyclization cascade catalyzed by the terpene cyclase dpmpB. The short chain dehydrogenase/reductase dpmpG then oxidizes the 8S hydroxy group to a ketone and the short chain dehydrogenase/reductase dpmpH reduces the ketone to the 8R hydroxy group to yield higginsianin B. Higginsianin B is further methylated by the methyltransferase dpmpI to produce the intermediate named FDDP B. The cytochrome P450 monooxygenase dpmpJ then oxidizes the C-26 methyl to primary alcohol, producing the final diterpenoid pyrone with a C-26 primary alcohol on the gamma-pyrone moiety named FDDP C. The sequence is that of Geranylgeranyl pyrophosphate synthase dpmpD from Macrophomina phaseolina (strain MS6) (Charcoal rot fungus).